The following is a 912-amino-acid chain: Isoleucine--tRNA ligase (912 aa).

Positions P57–T67 match the 'HIGH' region motif. Residue E549 participates in L-isoleucyl-5'-AMP binding. Residues K590 to S594 carry the 'KMSKS' region motif. Position 593 (K593) interacts with ATP. Zn(2+) is bound by residues C880, C883, C900, and C903.

Belongs to the class-I aminoacyl-tRNA synthetase family. IleS type 1 subfamily. As to quaternary structure, monomer. Requires Zn(2+) as cofactor.

It is found in the cytoplasm. It catalyses the reaction tRNA(Ile) + L-isoleucine + ATP = L-isoleucyl-tRNA(Ile) + AMP + diphosphate. Its function is as follows. Catalyzes the attachment of isoleucine to tRNA(Ile). As IleRS can inadvertently accommodate and process structurally similar amino acids such as valine, to avoid such errors it has two additional distinct tRNA(Ile)-dependent editing activities. One activity is designated as 'pretransfer' editing and involves the hydrolysis of activated Val-AMP. The other activity is designated 'posttransfer' editing and involves deacylation of mischarged Val-tRNA(Ile). This is Isoleucine--tRNA ligase from Fervidobacterium pennivorans (strain DSM 9078 / Ven5).